Reading from the N-terminus, the 92-residue chain is RNA-binding protein Hfq (92 aa).

The region spanning Asp-9–Phe-68 is the Sm domain.

It belongs to the Hfq family. In terms of assembly, homohexamer.

RNA chaperone that binds small regulatory RNA (sRNAs) and mRNAs to facilitate mRNA translational regulation in response to envelope stress, environmental stress and changes in metabolite concentrations. Also binds with high specificity to tRNAs. The protein is RNA-binding protein Hfq of Shewanella halifaxensis (strain HAW-EB4).